The following is a 379-amino-acid chain: cAMP-dependent protein kinase type I-alpha regulatory subunit (379 aa).

M1 bears the N-acetylmethionine mark. The dimerization and phosphorylation stretch occupies residues 1–134 (MASSSTSSEE…ALAKAIEKNV (134 aa)). A disordered region spans residues 63–93 (QMVSQQKSSSRSDSREDEVSPPMNPVVKGRR). The Pseudophosphorylation motif motif lies at 94–98 (RRGAI). Residues 135–252 (LFAH…SKVS), E200, R209, 253–379 (ILES…SLSV), E324, and R333 each bind 3',5'-cyclic AMP.

This sequence belongs to the cAMP-dependent kinase regulatory chain family. The inactive holoenzyme is composed of two regulatory chains and two catalytic chains. Activation by cAMP releases the two active catalytic monomers and the regulatory dimer. Interacts with PRKACA and PRKACB. Interacts with PRRC1; resulting in PKA activation. In terms of processing, the pseudophosphorylation site binds to the substrate-binding region of the catalytic chain, resulting in the inhibition of its activity.

The protein localises to the cell membrane. Functionally, regulatory subunit of the cAMP-dependent protein kinases involved in cAMP signaling in cells. This chain is cAMP-dependent protein kinase type I-alpha regulatory subunit (prkar1aa), found in Danio rerio (Zebrafish).